The chain runs to 467 residues: ATP synthase subunit beta (467 aa).

An ATP-binding site is contributed by 150 to 157 (GGAGVGKT).

Belongs to the ATPase alpha/beta chains family. As to quaternary structure, F-type ATPases have 2 components, CF(1) - the catalytic core - and CF(0) - the membrane proton channel. CF(1) has five subunits: alpha(3), beta(3), gamma(1), delta(1), epsilon(1). CF(0) has three main subunits: a(1), b(2) and c(9-12). The alpha and beta chains form an alternating ring which encloses part of the gamma chain. CF(1) is attached to CF(0) by a central stalk formed by the gamma and epsilon chains, while a peripheral stalk is formed by the delta and b chains.

Its subcellular location is the cell inner membrane. It carries out the reaction ATP + H2O + 4 H(+)(in) = ADP + phosphate + 5 H(+)(out). In terms of biological role, produces ATP from ADP in the presence of a proton gradient across the membrane. The catalytic sites are hosted primarily by the beta subunits. This chain is ATP synthase subunit beta, found in Vibrio parahaemolyticus serotype O3:K6 (strain RIMD 2210633).